We begin with the raw amino-acid sequence, 274 residues long: 2,3,4,5-tetrahydropyridine-2,6-dicarboxylate N-succinyltransferase (274 aa).

Residues arginine 104 and aspartate 141 each contribute to the substrate site.

This sequence belongs to the transferase hexapeptide repeat family. In terms of assembly, homotrimer.

The protein localises to the cytoplasm. The enzyme catalyses (S)-2,3,4,5-tetrahydrodipicolinate + succinyl-CoA + H2O = (S)-2-succinylamino-6-oxoheptanedioate + CoA. It functions in the pathway amino-acid biosynthesis; L-lysine biosynthesis via DAP pathway; LL-2,6-diaminopimelate from (S)-tetrahydrodipicolinate (succinylase route): step 1/3. This Idiomarina loihiensis (strain ATCC BAA-735 / DSM 15497 / L2-TR) protein is 2,3,4,5-tetrahydropyridine-2,6-dicarboxylate N-succinyltransferase.